We begin with the raw amino-acid sequence, 446 residues long: Tubulin beta-8 chain (446 aa).

Glutamine 11, glutamate 69, serine 138, glycine 142, threonine 143, glycine 144, asparagine 204, and asparagine 226 together coordinate GTP. Glutamate 69 is a binding site for Mg(2+). The segment at 426–446 is disordered; it reads QDATAEDDYDEDDDAAAADEA. The span at 429 to 446 shows a compositional bias: acidic residues; it reads TAEDDYDEDDDAAAADEA.

This sequence belongs to the tubulin family. Dimer of alpha and beta chains. A typical microtubule is a hollow water-filled tube with an outer diameter of 25 nm and an inner diameter of 15 nM. Alpha-beta heterodimers associate head-to-tail to form protofilaments running lengthwise along the microtubule wall with the beta-tubulin subunit facing the microtubule plus end conferring a structural polarity. Microtubules usually have 13 protofilaments but different protofilament numbers can be found in some organisms and specialized cells. Mg(2+) is required as a cofactor. As to expression, expressed in anthers.

The protein resides in the cytoplasm. It localises to the cytoskeleton. Its function is as follows. Tubulin is the major constituent of microtubules, a cylinder consisting of laterally associated linear protofilaments composed of alpha- and beta-tubulin heterodimers. Microtubules grow by the addition of GTP-tubulin dimers to the microtubule end, where a stabilizing cap forms. Below the cap, tubulin dimers are in GDP-bound state, owing to GTPase activity of alpha-tubulin. The polypeptide is Tubulin beta-8 chain (TUBB8) (Oryza sativa subsp. japonica (Rice)).